The chain runs to 1823 residues: THO complex subunit 2 (1823 aa).

Residues Asn935–Thr1003 adopt a coiled-coil conformation. A Nuclear localization signal motif is present at residues Lys964–Lys969. Disordered stretches follow at residues Leu1244–Asn1382 and Ala1394–Glu1823. Composition is skewed to basic and acidic residues over residues Gln1272–Thr1283, Lys1312–Pro1330, and Ala1356–Ser1367. Residues Ala1394–Ser1409 show a composition bias toward polar residues. Positions Pro1432–His1596 are enriched in basic and acidic residues. A compositionally biased stretch (pro residues) spans Leu1600–Ile1610. Basic and acidic residues-rich tracts occupy residues Ala1616–Ala1625, Pro1636–Glu1648, Asp1655–Ser1706, and Leu1768–Ala1785. A phosphoserine mark is found at Ser1646 and Ser1696. Residues Met1802–Ser1816 are compositionally biased toward polar residues.

It belongs to the THOC2 family. Component of the THO complex, which is composed of THO1, THO2, THO3, THO5, THO6 and THO7.

The protein localises to the nucleus. In terms of biological role, acts as a component of the THO subcomplex of the TREX complex which is thought to couple mRNA transcription, processing and nuclear export. The sequence is that of THO complex subunit 2 (THO2) from Arabidopsis thaliana (Mouse-ear cress).